A 313-amino-acid chain; its full sequence is Calcium homeostasis modulator protein 6 (313 aa).

At 1 to 21 (MEKFKAVLDLQRKHRNALGYS) the chain is on the cytoplasmic side. The chain crosses the membrane as a helical span at residues 22-37 (LVTLLTAGGEKIFSSV). At 38–46 (VFQCPCTAT) the chain is on the extracellular side. Intrachain disulfides connect C41–C125, C43–C154, and C138–C145. A helical membrane pass occupies residues 47-68 (WNLPYGLVFLLVPALALFLLGY). The Cytoplasmic portion of the chain corresponds to 69–101 (ALSARTWRLLTGCCSRSARFSSGLRSAFVCAQL). The helical transmembrane segment at 102-126 (SMTAAFAPLTWVAVALLEGSFYQCA) threads the bilayer. Topologically, residues 127–167 (VSGSARLAPYLCKGRDPNCNATLPQAPCNKQKVEMQEILSQ) are extracellular. The chain crosses the membrane as a helical span at residues 168–190 (LKAQSQVFGWILIAAVIILLLLV). Topologically, residues 191-313 (KSVTRCFSPV…DMSMTNTHEL (123 aa)) are cytoplasmic.

The protein belongs to the CALHM family. As to quaternary structure, oligomerizes to form decameric and undecameric channels. Post-translationally, N-glycosylated. Immune cells in primary and secondary lymphoid organs.

It localises to the cell membrane. It catalyses the reaction ATP(in) = ATP(out). With respect to regulation, inhibited by Gd(3+). Partially inhibited by divalent ions Ca(2+) and Ba(2+). Its function is as follows. Pore-forming subunit of an ATP-permeable channel. In response to pathogen-derived and proinflammatory stimuli, relocates from intracellular compartments to NK-dendritic cell and NK-macrophage immune synapses where it mediates ATP efflux and NK cell activation involved in antimicrobial and antitumor responses. May assemble to form gap junction channel-like structures with gating and ion conductance likely regulated by membrane lipids and voltage rather than by extracellular calcium levels. The chain is Calcium homeostasis modulator protein 6 from Mus musculus (Mouse).